The sequence spans 210 residues: Holliday junction resolvase RecU (210 aa).

Mg(2+) contacts are provided by threonine 93, aspartate 95, glutamate 108, and glutamine 127.

This sequence belongs to the RecU family. Mg(2+) is required as a cofactor.

It is found in the cytoplasm. It catalyses the reaction Endonucleolytic cleavage at a junction such as a reciprocal single-stranded crossover between two homologous DNA duplexes (Holliday junction).. In terms of biological role, endonuclease that resolves Holliday junction intermediates in genetic recombination. Cleaves mobile four-strand junctions by introducing symmetrical nicks in paired strands. Promotes annealing of linear ssDNA with homologous dsDNA. Required for DNA repair, homologous recombination and chromosome segregation. This is Holliday junction resolvase RecU from Lactobacillus helveticus (strain DPC 4571).